Here is a 339-residue protein sequence, read N- to C-terminus: Alcohol dehydrogenase notN (339 aa).

Residues Cys-44, His-65, Glu-66, Cys-99, Cys-102, Cys-110, and Cys-152 each coordinate Zn(2+). Residue His-65 coordinates an alcohol. NAD(+)-binding positions include 176–181 (GLGGLG), 196–201 (VAISRG), Lys-204, 263–265 (LSF), 287–289 (PSG), and 295–297 (EDA).

This sequence belongs to the zinc-containing alcohol dehydrogenase family. The cofactor is Zn(2+).

It catalyses the reaction a primary alcohol + NAD(+) = an aldehyde + NADH + H(+). The catalysed reaction is a secondary alcohol + NAD(+) = a ketone + NADH + H(+). Its function is as follows. Alcohol dehydrogenase; part of the gene cluster that mediates the biosynthesis of notoamide, a fungal indole alkaloid that belongs to a family of natural products containing a characteristic bicyclo[2.2.2]diazaoctane core. The first step of notoamide biosynthesis involves coupling of L-proline and L-tryptophan by the bimodular NRPS notE, to produce cyclo-L-tryptophan-L-proline called brevianamide F. The reverse prenyltransferase notF then acts as a deoxybrevianamide E synthase and converts brevianamide F to deoxybrevianamide E via reverse prenylation at C-2 of the indole ring leading to the bicyclo[2.2.2]diazaoctane core. Deoxybrevianamide E is further hydroxylated at C-6 of the indole ring, likely catalyzed by the cytochrome P450 monooxygenase notG, to yield 6-hydroxy-deoxybrevianamide E. 6-hydroxy-deoxybrevianamide E is a specific substrate of the prenyltransferase notC for normal prenylation at C-7 to produce 6-hydroxy-7-prenyl-deoxybrevianamide, also called notoamide S. As the proposed pivotal branching point in notoamide biosynthesis, notoamide S can be diverted to notoamide E through an oxidative pyran ring closure putatively catalyzed by either notH cytochrome P450 monooxygenase or the notD FAD-linked oxidoreductase. This step would be followed by an indole 2,3-epoxidation-initiated pinacol-like rearrangement catalyzed by the notB FAD-dependent monooxygenase leading to the formation of notoamide C and notoamide D. On the other hand notoamide S is converted to notoamide T by notH (or notD), a bifunctional oxidase that also functions as the intramolecular Diels-Alderase responsible for generation of (+)-notoamide T. To generate antipodal (-)-notoaminide T, notH' (or notD') in Aspergillus versicolor is expected to catalyze a Diels-Alder reaction leading to the opposite stereochemistry. The remaining oxidoreductase notD (or notH) likely catalyzes the oxidative pyran ring formation to yield (+)-stephacidin A. The FAD-dependent monooxygenase notI is highly similar to notB and is predicted to catalyze a similar conversion from (+)-stephacidin A to (-)-notoamide B via the 2,3-epoxidation of (+)-stephacidin A followed by a pinacol-type rearrangement. Finally, it remains unclear which enzyme could be responsible for the final hydroxylation steps leading to notoamide A and sclerotiamide. The function of notN in the notoamide biosynthesis has not been determined yet. The chain is Alcohol dehydrogenase notN from Aspergillus sp. (strain MF297-2).